A 197-amino-acid polypeptide reads, in one-letter code: GTP cyclohydrolase-2 (197 aa).

50-54 (RIHSE) is a GTP binding site. Cys-55, Cys-66, and Cys-68 together coordinate Zn(2+). GTP is bound by residues Gln-71, 93–95 (EGR), and Thr-115. Asp-127 acts as the Proton acceptor in catalysis. The active-site Nucleophile is Arg-129. The GTP site is built by Thr-150 and Lys-155.

This sequence belongs to the GTP cyclohydrolase II family. It depends on Zn(2+) as a cofactor.

It carries out the reaction GTP + 4 H2O = 2,5-diamino-6-hydroxy-4-(5-phosphoribosylamino)-pyrimidine + formate + 2 phosphate + 3 H(+). It participates in cofactor biosynthesis; riboflavin biosynthesis; 5-amino-6-(D-ribitylamino)uracil from GTP: step 1/4. In terms of biological role, catalyzes the conversion of GTP to 2,5-diamino-6-ribosylamino-4(3H)-pyrimidinone 5'-phosphate (DARP), formate and pyrophosphate. The protein is GTP cyclohydrolase-2 of Tolumonas auensis (strain DSM 9187 / NBRC 110442 / TA 4).